A 1170-amino-acid polypeptide reads, in one-letter code: MAASSEILPESWQVFINFRGADLRNGFISHLAGALTSAGITYYIDTEEVPSEDLTVLFKRIEESEIALSIFSSNYAESKWCLDELVKIMEQVKKGKLRIMPVFFNVKPEEVREQNGEFGLKLYGEGKSKRPNIPNWENALRSVPSKIGLNLANFRNEKELLDKIIDSIKKVLARITRASRVAESLNGISKDSEAKNVDTFSPNSSDFPSTSIDDDLSINSPQYQATIPPASREGERLNTISTVSSTGSIEHPPPNYGIEPRLKEMEEKLDFDSLETKTVGIVGMPGIGKTTLAETLYRKWEHKFERSMFFPDASKMANEHGMCWLQKRLLEELLKDTNLNIGYTTNEHEFCKDVLLLKKVFLVIDNVSSEEQIETLFGKWNWIKNGSKIVITSSDESMLKGFVKDTYVVPSLNSRDSLLWFTNHAFGLDDAQGNLVKLSKHFLNYAKGNPLALGAFGVELCGKDKADWEKRIKTLTLISNKMIQDVLRRRYDELTERQKDIFLDVACFFKSENESYVRHVVNSCDSESTKSWDEITDLKGKFLVNISGGRVEMHDILCTFAKELASQALTEDTRVHLRLWNYQDIMWFLNNELEMENVRGIFLDMSKVPEEMTFDGNIFSNMCNLRYLKIYSSVCHKEGEGIFKFDTVREIQLPLDKVRYLHWMKYPWEKLPSDFNPENLVDLELPYSSIKKVWEGVKDTPILKWANLSYSSKLTNLLGLSNAKNLERLNLEGCTSLLKLPQEMENMKSLVFLNMRRCTSLTCLQSIKVSSLKILILSDCSKLEEFEVISENLEELYLDGTAIKGLPPAAGDLTRLVVLNMEGCTELESLPKRLGKQKALQELVLSGCSKLESVPTDVKDMKHLRLLLLDGTRIRKIPKIKSLKCLCLSRNIAMVNLQDNLKDFSNLKCLVMKNCENLRYLPSLPKCLEYLNVYGCERLESVENPLVADRLTLFLDRSEELRSTFLFTNCHNLFQDAKDSISTYAKWKCHRLAVECYEQDIVSGAFFNTCYPGYIVPSWFDHQAVGSVLEPRLEPHWYNTMLSGIALCAVVSFHENQDPIIGSFSVKCTLQFENEDGSLRFDCDIGCLNEPGMIEADHVFIGYVTCSRLKDHHSIPIHHPTTVKMQFHLTDACKSKVVDCGFRLMYTQSRGCLLEEEVNANFTKLYLGLL.

In terms of domain architecture, TIR spans 10-172; sequence ESWQVFINFR…KIIDSIKKVL (163 aa). The active site involves glutamate 84. Residues 193-219 are disordered; it reads EAKNVDTFSPNSSDFPSTSIDDDLSIN. Over residues 198 to 219 the composition is skewed to polar residues; that stretch reads DTFSPNSSDFPSTSIDDDLSIN. An NB-ARC domain is found at 261–513; the sequence is RLKEMEEKLD…DVACFFKSEN (253 aa). LRR repeat units follow at residues 595-616, 622-645, 646-670, 677-700, 723-747, 761-785, 790-813, 815-837, 838-861, 862-885, 888-904, and 905-930; these read MENV…TFDG, MCNL…IFKF, DTVR…PWEK, PENL…VKDT, AKNL…MENM, LTCL…KLEE, SENL…AGDL, RLVV…LGKQ, KALQ…VKDM, KHLR…SLKC, LSRN…LKDF, and SNLK…CLEY.

It carries out the reaction NAD(+) + H2O = ADP-D-ribose + nicotinamide + H(+). In terms of biological role, TIR-NB-LRR receptor-like protein that may play a role in plant innate immunity. May trigger hypersensitive programmed cell death in response to pathogen attack. Involved in tolerance to tobacco ringspot virus (TRSV). This chain is Disease resistance protein LAZ5, found in Arabidopsis thaliana (Mouse-ear cress).